A 213-amino-acid polypeptide reads, in one-letter code: Uracil phosphoribosyltransferase (213 aa).

Residues arginine 78, arginine 103, and 131–139 (DPMLATGGT) each bind 5-phospho-alpha-D-ribose 1-diphosphate. Uracil is bound by residues isoleucine 197 and 202–204 (GDA). Aspartate 203 is a binding site for 5-phospho-alpha-D-ribose 1-diphosphate.

This sequence belongs to the UPRTase family. Mg(2+) serves as cofactor.

The catalysed reaction is UMP + diphosphate = 5-phospho-alpha-D-ribose 1-diphosphate + uracil. It participates in pyrimidine metabolism; UMP biosynthesis via salvage pathway; UMP from uracil: step 1/1. Allosterically activated by GTP. Catalyzes the conversion of uracil and 5-phospho-alpha-D-ribose 1-diphosphate (PRPP) to UMP and diphosphate. The sequence is that of Uracil phosphoribosyltransferase from Bifidobacterium animalis subsp. lactis (strain AD011).